Consider the following 156-residue polypeptide: 6,7-dimethyl-8-ribityllumazine synthase (156 aa).

Residues phenylalanine 22, 57–59 (AYE), and 81–83 (TVI) contribute to the 5-amino-6-(D-ribitylamino)uracil site. Residue 86-87 (GT) participates in (2S)-2-hydroxy-3-oxobutyl phosphate binding. Histidine 89 functions as the Proton donor in the catalytic mechanism. Position 114 (phenylalanine 114) interacts with 5-amino-6-(D-ribitylamino)uracil. Arginine 128 lines the (2S)-2-hydroxy-3-oxobutyl phosphate pocket.

The protein belongs to the DMRL synthase family. In terms of assembly, forms an icosahedral capsid composed of 60 subunits, arranged as a dodecamer of pentamers.

It catalyses the reaction (2S)-2-hydroxy-3-oxobutyl phosphate + 5-amino-6-(D-ribitylamino)uracil = 6,7-dimethyl-8-(1-D-ribityl)lumazine + phosphate + 2 H2O + H(+). Its pathway is cofactor biosynthesis; riboflavin biosynthesis; riboflavin from 2-hydroxy-3-oxobutyl phosphate and 5-amino-6-(D-ribitylamino)uracil: step 1/2. Its function is as follows. Catalyzes the formation of 6,7-dimethyl-8-ribityllumazine by condensation of 5-amino-6-(D-ribitylamino)uracil with 3,4-dihydroxy-2-butanone 4-phosphate. This is the penultimate step in the biosynthesis of riboflavin. This is 6,7-dimethyl-8-ribityllumazine synthase from Erwinia tasmaniensis (strain DSM 17950 / CFBP 7177 / CIP 109463 / NCPPB 4357 / Et1/99).